Here is a 442-residue protein sequence, read N- to C-terminus: UDP-N-acetylmuramoylalanine--D-glutamate ligase (442 aa).

113–119 contacts ATP; sequence GSNGKTT.

This sequence belongs to the MurCDEF family.

Its subcellular location is the cytoplasm. It catalyses the reaction UDP-N-acetyl-alpha-D-muramoyl-L-alanine + D-glutamate + ATP = UDP-N-acetyl-alpha-D-muramoyl-L-alanyl-D-glutamate + ADP + phosphate + H(+). It participates in cell wall biogenesis; peptidoglycan biosynthesis. Cell wall formation. Catalyzes the addition of glutamate to the nucleotide precursor UDP-N-acetylmuramoyl-L-alanine (UMA). The sequence is that of UDP-N-acetylmuramoylalanine--D-glutamate ligase from Coxiella burnetii (strain Dugway 5J108-111).